A 49-amino-acid chain; its full sequence is Large ribosomal subunit protein bL33B (49 aa).

Belongs to the bacterial ribosomal protein bL33 family.

This chain is Large ribosomal subunit protein bL33B, found in Lactobacillus delbrueckii subsp. bulgaricus (strain ATCC BAA-365 / Lb-18).